Reading from the N-terminus, the 449-residue chain is MITLRKLPLAVAVAAGVMSAQAMAVDFHGYARSGIGWTGSGGEQQCFQATGAQSKYRLGNECETYAELKLGQEVWKEGDKSFYFDTNVAYSVAQQNDWEATDPAFREANVQGKNLIDWLPGSTIWAGKRFYQRHDVHMIDFYYWDISGPGAGIENIDLGFGKLSLAATRSQEAGGSYTFSSQDIYNSSKDTANDVFDVRLAGLETNPDGVLELGVDYGRANTTDDYRLADGASKDGWMFTAEHTQSMLKGYNKFVVQYATDAMTTQGKGIPQGSYGSTFDIGEGDDQLHYVDRYVNNNGKLWRILDHGAISLGDRWDLMYVGMFQKQDLDNDLGTDWWTVGVRPMFKWTPIMSTLLEVGYDNVKSQQTGDRNNQYKITLAQQWQAGDSIWSRPAIRLFATYAKWDEKWGYIKDGDNTLRYAASNNSGFNTTSRGDNDEWSFGAQMEIWW.

Positions 1-24 (MITLRKLPLAVAVAAGVMSAQAMA) are cleaved as a signal peptide.

Belongs to the porin LamB (TC 1.B.3) family. As to quaternary structure, homotrimer formed of three 18-stranded antiparallel beta-barrels, containing three independent channels.

Its subcellular location is the cell outer membrane. It carries out the reaction beta-maltose(in) = beta-maltose(out). Functionally, involved in the transport of maltose and maltodextrins. This chain is Maltoporin, found in Citrobacter koseri (strain ATCC BAA-895 / CDC 4225-83 / SGSC4696).